The primary structure comprises 161 residues: MATANAEQSIGPPEQAQVIQPPLPATITDLAALLEIPLDDCLVPCNFCGNFLTYLEICEFDEKRLSLIWKEYLVYACCRCCCTATATFEFNEFYESTVTGREIEDVTGKSIFDIDVRCQTCMKYLDAIEKLDICGRRRPFHLVRGSWKGICRLCKHFYNDW.

Zinc fingers lie at residues 45 to 81 (CNFC…CRCC) and 118 to 154 (CQTC…CRLC).

It belongs to the papillomaviridae E6 protein family. In terms of assembly, forms homodimers. Interacts with ubiquitin-protein ligase UBE3A/E6-AP; this interaction stimulates UBE3A ubiquitin activity. Interacts with host BAK1.

The protein localises to the host cytoplasm. It is found in the host nucleus. In terms of biological role, plays a major role in the induction and maintenance of cellular transformation. E6 associates with host UBE3A/E6-AP ubiquitin-protein ligase and modulates its activity. Protects host keratinocytes from apoptosis by mediating the degradation of host BAK1. May also inhibit host immune response. This chain is Protein E6, found in Homo sapiens (Human).